The primary structure comprises 203 residues: MPDYKVYYFNVKALGEPLRFLLSYGNLPFDDVRITREEWPALKPTMPMGQMPVLEVDGKKVHQSVAMSRYLANQVGLAGADDWENLMIDTVVDTVNDFRLKIAIVAYEPDDMVKEKKMVTLNNEVIPFYLTKLNVIAKENNGHLVLGKPTWADVYFAGILDYLNYLTKTNLLENFPNLQEVVQKVLDNENVKAYIAKRPITEV.

One can recognise a GST N-terminal domain in the interval 2-79 (PDYKVYYFNV…YLANQVGLAG (78 aa)). Residues Tyr-8, Trp-39, Lys-43, 49-51 (GQM), and 63-64 (QS) each bind glutathione. Positions 81–203 (DDWENLMIDT…YIAKRPITEV (123 aa)) constitute a GST C-terminal domain.

It belongs to the GST superfamily. Sigma family. In terms of assembly, homodimer.

It carries out the reaction RX + glutathione = an S-substituted glutathione + a halide anion + H(+). Conjugation of reduced glutathione to a wide number of exogenous and endogenous hydrophobic electrophiles. The sequence is that of Glutathione S-transferase (GstS1) from Anopheles gambiae (African malaria mosquito).